Reading from the N-terminus, the 126-residue chain is Holo-[acyl-carrier-protein] synthase (126 aa).

Asp-6 and Glu-55 together coordinate Mg(2+).

Belongs to the P-Pant transferase superfamily. AcpS family. It depends on Mg(2+) as a cofactor.

Its subcellular location is the cytoplasm. The enzyme catalyses apo-[ACP] + CoA = holo-[ACP] + adenosine 3',5'-bisphosphate + H(+). Transfers the 4'-phosphopantetheine moiety from coenzyme A to a Ser of acyl-carrier-protein. This Chlorobium limicola (strain DSM 245 / NBRC 103803 / 6330) protein is Holo-[acyl-carrier-protein] synthase.